An 866-amino-acid chain; its full sequence is Probable LRR receptor-like serine/threonine-protein kinase At5g16900 (866 aa).

A signal peptide spans 1–20; sequence MEDRHRYLFFIFAIIHYVQA. The Extracellular portion of the chain corresponds to 21 to 515; sequence QQGFISLDCG…SSSGNKETTV (495 aa). Asparagine 137, asparagine 176, asparagine 230, asparagine 251, asparagine 331, asparagine 404, asparagine 409, and asparagine 436 each carry an N-linked (GlcNAc...) asparagine glycan. 3 LRR repeats span residues 415-438, 439-461, and 463-485; these read RIISLDLSSHKLTGKIVPDIQNLT, QLQKLDLSNNKLTGGVPEFLANM, and SLLFINLSNNNLVGSIPQALLDR. Residues asparagine 468 and asparagine 505 are each glycosylated (N-linked (GlcNAc...) asparagine). A helical transmembrane segment spans residues 516-536; sequence IAPVAAAIAIFIAVLVLIIVF. Residues 537–866 are Cytoplasmic-facing; the sequence is IKKRPSSIRA…LNQVIDSKSS (330 aa). The residue at position 564 (threonine 564) is a Phosphothreonine. The 274-residue stretch at 573-846 folds into the Protein kinase domain; sequence NNFERVIGEG…HVVQELKQCI (274 aa). Residues 579-587 and lysine 601 contribute to the ATP site; that span reads IGEGGFGVV. A Phosphotyrosine modification is found at tyrosine 646. The active-site Proton acceptor is the aspartate 698. Serine 732 carries the phosphoserine modification. Phosphothreonine occurs at positions 733 and 738. At tyrosine 746 the chain carries Phosphotyrosine.

It belongs to the protein kinase superfamily. Ser/Thr protein kinase family.

It localises to the membrane. The enzyme catalyses L-seryl-[protein] + ATP = O-phospho-L-seryl-[protein] + ADP + H(+). It carries out the reaction L-threonyl-[protein] + ATP = O-phospho-L-threonyl-[protein] + ADP + H(+). The polypeptide is Probable LRR receptor-like serine/threonine-protein kinase At5g16900 (Arabidopsis thaliana (Mouse-ear cress)).